Here is a 56-residue protein sequence, read N- to C-terminus: Cecropin-A2 (56 aa).

R55 carries the post-translational modification Arginine amide.

Belongs to the cecropin family.

It localises to the secreted. Functionally, cecropins have lytic and antibacterial activity against several Gram-positive and Gram-negative bacteria. In Drosophila yakuba (Fruit fly), this protein is Cecropin-A2 (CecA2).